The following is an 88-amino-acid chain: MKSSIFFKLLLLVSLLVVIFRQSYAVADYCNRDADCKRVCLRPYACNLTRHLCMCHPNDVSSSKQHCIPEHKGFGEGGPPPQRLKLYR.

The first 25 residues, 1–25 (MKSSIFFKLLLLVSLLVVIFRQSYA), serve as a signal peptide directing secretion. Cystine bridges form between C30–C46, C36–C53, and C40–C55.

The protein belongs to the DEFL family.

It localises to the secreted. This is Putative defensin-like protein 256 from Arabidopsis thaliana (Mouse-ear cress).